Reading from the N-terminus, the 582-residue chain is Protein LYRIC (582 aa).

Topologically, residues 1 to 48 are lumenal; sequence MAARSWQDELAQQAEEGSARLREMLSVGLGFLRTELGLDLGLEPKRYP. The interval 1-71 is activation of NF-kappa-B; that stretch reads MAARSWQDEL…LLLFLLGYGW (71 aa). The helical transmembrane segment at 49–69 threads the bilayer; that stretch reads GWVILVGTGALGLLLLFLLGY. Over 70-582 the chain is Cytoplasmic; the sequence is GWAAACAGAR…KKKKKARRET (513 aa). Residues 72 to 169 form an interaction with BCCIP region; that stretch reads AAACAGARKK…EKSKKNKKKS (98 aa). The disordered stretch occupies residues 78–222; that stretch reads ARKKRRSPPR…DSGSLDSTIP (145 aa). Residues 93-106 show a composition bias toward low complexity; sequence AAVPAAAPDDLALL. The segment at 101-205 is interaction with RELA; sequence DDLALLKNLR…ISHREKRQQR (105 aa). A compositionally biased stretch (basic and acidic residues) spans 109 to 127; the sequence is LRSEEQKKKNRKKLSEKPK. Position 143 is a phosphothreonine (threonine 143). Positions 160–169 are enriched in basic residues; the sequence is EKSKKNKKKS. Position 180 is a phosphoserine (serine 180). Over residues 198–208 the composition is skewed to basic residues; it reads HREKRQQRKRD. A phosphoserine mark is found at serine 216 and serine 251. An N6-acetyllysine modification is found at lysine 264. Residues 280 to 582 form a disordered region; that stretch reads TVNGGGWNEK…KKKKKARRET (303 aa). Residues serine 298, serine 306, serine 308, serine 311, serine 323, serine 339, serine 344, and serine 369 each carry the phosphoserine modification. Over residues 320–333 the composition is skewed to polar residues; sequence SAWSQDTGDANTNG. Composition is skewed to polar residues over residues 354-372 and 383-394; these read EPVS…SRNQ and NGLSSADPNSDW. The segment at 381–443 is lung-homing for mammary tumors; it reads GLNGLSSADP…EGALPTGKSK (63 aa). Phosphoserine is present on residues serine 415 and serine 426. Over residues 421 to 434 the composition is skewed to basic and acidic residues; that stretch reads DDQKVSDDDKEKGE. Residues 441-451 are compositionally biased toward basic residues; that stretch reads KSKKKKKKKKK. Serine 457 is modified (phosphoserine). Threonine 458 is subject to Phosphothreonine. A phosphoserine mark is found at serine 478, serine 494, and serine 496. Polar residues-rich tracts occupy residues 504-520 and 549-568; these read KNSQ…STEP and NTKQ…SWES. Serine 568 is subject to Phosphoserine. The span at 571–582 shows a compositional bias: basic residues; that stretch reads QIKKKKKARRET.

In terms of assembly, interacts with BCCIP, CREBBP/CBP and RELA/p65. Widely expressed with highest levels in muscle-dominating organs such as skeletal muscle, heart, tongue and small intestine and in endocrine glands such as thyroid and adrenal gland. Overexpressed in various cancers including breast, brain, prostate, melanoma and glioblastoma multiforme.

The protein resides in the endoplasmic reticulum membrane. It is found in the nucleus membrane. Its subcellular location is the cell junction. The protein localises to the tight junction. It localises to the nucleus. The protein resides in the nucleolus. It is found in the cytoplasm. Its subcellular location is the perinuclear region. Down-regulates SLC1A2/EAAT2 promoter activity when expressed ectopically. Activates the nuclear factor kappa-B (NF-kappa-B) transcription factor. Promotes anchorage-independent growth of immortalized melanocytes and astrocytes which is a key component in tumor cell expansion. Promotes lung metastasis and also has an effect on bone and brain metastasis, possibly by enhancing the seeding of tumor cells to the target organ endothelium. Induces chemoresistance. This is Protein LYRIC (MTDH) from Homo sapiens (Human).